Reading from the N-terminus, the 336-residue chain is MIQKNWQELIKPNKVEFASSGRTKATLVAEPLERGFGLTLGNALRRVLLSSLRGAAVTAVQIDGVLHEFSSIPGVREDVTDIVLNIKEIAIKMDGDDAKRMVVRKQGPGVVTAGDIQTVGDIEILNPNHVICTLDEGAEIRMEFTVNNGKGYVPADRNRSEDAPIGLIPVDSLYSPVKKVSYKVENTREGQVLDYDKLTMSIETDGSVTGEDAIAFAARILQDQLSVFVNFDEPQKETEEEAVTELAFNPALLKKVDELELSVRSANCLKNDNIVYIGDLIQKTEAEMLRTPNFGRKSLNEIKEVLASMGLHLGMEVPSWPPENIEDLAKRYEDQY.

The interval 1-232 (MIQKNWQELI…DQLSVFVNFD (232 aa)) is alpha N-terminal domain (alpha-NTD). Residues 248 to 336 (FNPALLKKVD…DLAKRYEDQY (89 aa)) are alpha C-terminal domain (alpha-CTD).

The protein belongs to the RNA polymerase alpha chain family. Homodimer. The RNAP catalytic core consists of 2 alpha, 1 beta, 1 beta' and 1 omega subunit. When a sigma factor is associated with the core the holoenzyme is formed, which can initiate transcription.

It carries out the reaction RNA(n) + a ribonucleoside 5'-triphosphate = RNA(n+1) + diphosphate. DNA-dependent RNA polymerase catalyzes the transcription of DNA into RNA using the four ribonucleoside triphosphates as substrates. This is DNA-directed RNA polymerase subunit alpha from Sinorhizobium medicae (strain WSM419) (Ensifer medicae).